The following is a 501-amino-acid chain: Zinc finger protein PLAG1 (501 aa).

A disordered region spans residues 1 to 30 (MATVIPGDLSEVRDTQKVPSGKRKRGETKP). The short motif at 22–25 (KRKR) is the Nuclear localization signal element. 7 consecutive C2H2-type zinc fingers follow at residues 34–56 (FPCQLCDKAFNSVEKLKVHSYSH), 62–86 (YKCTQQDCTKAFVSKYKLLRHMATH), 92–114 (HKCNYCEKMFHRKDHLKNHLHTH), 121–143 (FKCEECGKNYNTKLGFKRHLALH), 150–172 (LTCKVCLQTFESTGVLLEHLKTH), 185–207 (HQCEHCDRRFYTRKDVRRHMVVH), and 213–236 (FLCQYCAQRFGRKDHLTRHMKKSH). Composition is skewed to low complexity over residues 366 to 380 (SGMPSSSQDSQASSS) and 455 to 467 (TQLPPQTQDPQDP). 2 disordered regions span residues 366-406 (SGMP…GSVP) and 447-474 (QEEAHSSMTQLPPQTQDPQDPSNSIGLG).

The protein belongs to the krueppel C2H2-type zinc-finger protein family. Expressed in nephroblastoma.

The protein resides in the nucleus. Functionally, transcription factor and proto-oncogene whose activation results in up-regulation of target genes, such as IGFII, leading to uncontrolled cell proliferation. The sequence is that of Zinc finger protein PLAG1 (PLAG1) from Gallus gallus (Chicken).